Here is a 90-residue protein sequence, read N- to C-terminus: Protein LURE 1.2 (90 aa).

The first 19 residues, 1-19 (MKLPIIFLTLLIFVSSCTS), serve as a signal peptide directing secretion. The N-linked (GlcNAc...) asparagine glycan is linked to Asn-23. 3 cysteine pairs are disulfide-bonded: Cys-58–Cys-75, Cys-61–Cys-82, and Cys-65–Cys-84. Residues 67–87 (RRGKYIRTCSFERKLCRCSIS) form a PRK6 binding region.

This sequence belongs to the DEFL family. Interacts with MDIS1, MIK1, MIK2 and TDR/PXY, but not with MDIS2. Binds to PRK6 LRRs. In terms of tissue distribution, expressed in the pistil. Detected exclusively in the synergid cells.

The protein resides in the secreted. In terms of biological role, pollen tube attractants guiding pollen tubes to the ovular micropyle. Attracts specifically pollen tubes from A.thaliana, but not those from A.lyrata. Triggers endocytosis of MDIS1 in the pollen tube tip. The chain is Protein LURE 1.2 from Arabidopsis thaliana (Mouse-ear cress).